We begin with the raw amino-acid sequence, 688 residues long: Mitochondrial potassium channel ATP-binding subunit (688 aa).

The transit peptide at 1–31 directs the protein to the mitochondrion; it reads MLFHFLQAGLRQCRPPARLVGLETGLSGARG. Transmembrane regions (helical) follow at residues 115–135, 168–188, 268–288, and 342–362; these read PQLI…LLNI, LKLL…IVLL, GLLL…GSFL, and VLGV…NCIV. An ABC transmembrane type-1 domain is found at 121–409; it reads LTAVLLAFGA…MSVLFGQVVR (289 aa). One can recognise an ABC transporter domain in the interval 442–679; the sequence is IHFKDVSFSY…GGLYADLIRR (238 aa). 477-484 contacts ATP; it reads GQSGGGKS.

This sequence belongs to the ABC transporter superfamily. ABCB family. Multidrug resistance exporter (TC 3.A.1.201) subfamily. Component of the mitochondrial potassium channel (mitoK(ATP)).

It is found in the mitochondrion inner membrane. ATP-binding subunit of the mitochondrial ATP-gated potassium channel (mitoK(ATP)). Together with pore-forming subunit CCDC51/MITOK of the mitoK(ATP) channel, mediates ATP-dependent potassium currents across the mitochondrial inner membrane. An increase in ATP intracellular levels closes the channel, inhibiting K(+) transport, whereas a decrease in ATP levels enhances K(+) uptake in the mitochondrial matrix. Plays a role in mitochondrial iron transport. Required for maintenance of normal cardiac function, possibly by influencing mitochondrial iron export and regulating the maturation of cytosolic iron sulfur cluster-containing enzymes. The polypeptide is Mitochondrial potassium channel ATP-binding subunit (Xenopus tropicalis (Western clawed frog)).